The sequence spans 108 residues: Thiosulfate sulfurtransferase GlpE (108 aa).

Residues E18–T106 enclose the Rhodanese domain. Catalysis depends on C66, which acts as the Cysteine persulfide intermediate.

Belongs to the GlpE family.

It localises to the cytoplasm. The catalysed reaction is thiosulfate + hydrogen cyanide = thiocyanate + sulfite + 2 H(+). It carries out the reaction thiosulfate + [thioredoxin]-dithiol = [thioredoxin]-disulfide + hydrogen sulfide + sulfite + 2 H(+). Its function is as follows. Transferase that catalyzes the transfer of sulfur from thiosulfate to thiophilic acceptors such as cyanide or dithiols. May function in a CysM-independent thiosulfate assimilation pathway by catalyzing the conversion of thiosulfate to sulfite, which can then be used for L-cysteine biosynthesis. This Actinobacillus pleuropneumoniae serotype 3 (strain JL03) protein is Thiosulfate sulfurtransferase GlpE.